The chain runs to 389 residues: Vacuolar protein sorting-associated protein vts1 (389 aa).

A disordered region spans residues 149–335 (NPQRKAKTPS…RPSQPTKASP (187 aa)). Polar residues-rich tracts occupy residues 156 to 177 (TPSN…TLPT), 184 to 219 (TNAS…SSEP), and 227 to 282 (SLSS…PESK). The segment covering 294–306 (TSITTTSTSIDPS) has biased composition (low complexity). A compositionally biased stretch (polar residues) spans 308–334 (AFSSKSTLATTRTNAPLSRPSQPTKAS).

Belongs to the VTA1 family. As to quaternary structure, homodimer (in cytoplasm).

It is found in the cytoplasm. Its subcellular location is the endosome membrane. In terms of biological role, has a role in the formation of the multivesicular body (MVB). Required for the sorting of lipids to form intralumenal vesicles and for fluid-phase transport to the vacuole. Required for sorting several plasma membrane proteins into the MVB. This is Vacuolar protein sorting-associated protein vts1 (vts1) from Schizosaccharomyces pombe (strain 972 / ATCC 24843) (Fission yeast).